The following is an 87-amino-acid chain: Small ribosomal subunit protein uS17 (87 aa).

Belongs to the universal ribosomal protein uS17 family. As to quaternary structure, part of the 30S ribosomal subunit.

Functionally, one of the primary rRNA binding proteins, it binds specifically to the 5'-end of 16S ribosomal RNA. The protein is Small ribosomal subunit protein uS17 of Alkalilimnicola ehrlichii (strain ATCC BAA-1101 / DSM 17681 / MLHE-1).